A 432-amino-acid polypeptide reads, in one-letter code: C-type cytochrome OmcS (432 aa).

An N-terminal signal peptide occupies residues 1–25 (MKKGMKVSLSVAAAALLMSAPAAFA).

Heme serves as cofactor.

Its subcellular location is the cell outer membrane. It localises to the cell surface. Functionally, plays an important role in extracellular electron transfer. Can transfer electrons to insoluble Fe(3+) oxides as well as other extracellular electron acceptors, including Mn(4+) oxide and humic substances. Essential for direct interspecies electron transfer (DIET) in cocultures with G.metallireducens. The protein is C-type cytochrome OmcS of Geobacter sulfurreducens (strain ATCC 51573 / DSM 12127 / PCA).